A 168-amino-acid chain; its full sequence is Variant surface antigen D (168 aa).

The N-terminal stretch at 1–29 (MKKSIFSKKLLVSFGSLVTLAAIPLIAIS) is a signal peptide. A lipid anchor (N-palmitoyl cysteine) is attached at Cys30. Cys30 carries the S-diacylglycerol cysteine lipid modification. The disordered stretch occupies residues 33–168 (TNTDQSQQPG…STSTSNMNTR (136 aa)). Low complexity-rich tracts occupy residues 35 to 44 (TDQSQQPGSG) and 52 to 71 (GTTT…ESGT). A compositionally biased stretch (gly residues) spans 72-81 (TTGGQTGTTT). 7 tandem repeats follow at residues 81 to 92 (TGGQSDSTSTSK), 93 to 104 (EQGSSDSTSTSK), 105 to 116 (EQGSSDSTSTSK), 117 to 128 (EQGSSDSTSTSK), 129 to 140 (EQGSSDSTSTSK), 141 to 152 (EQGSSDSTSTSK), and 153 to 164 (EQGSSDSTSTSN). The 7 X 12 AA tandem repeats stretch occupies residues 81-164 (TGGQSDSTST…GSSDSTSTSN (84 aa)). Residues 82–168 (GGQSDSTSTS…STSTSNMNTR (87 aa)) show a composition bias toward low complexity.

Its subcellular location is the cell membrane. Responsible for the antigenic diversity for host adaptation. Expression in E.coli of a construct containing vlpD, vlpE, and vlpF yields antigenically distinguishable products corresponding to each gene. In Mesomycoplasma hyorhinis (Mycoplasma hyorhinis), this protein is Variant surface antigen D (vlpD).